The primary structure comprises 383 residues: Chitinase-3-like protein 1 (383 aa).

A signal peptide spans 1 to 21; sequence MGLRVAQTGFVALVLLQSCAA. The region spanning 22-383 is the GH18 domain; sequence YKLVCYYTSW…SAIKDVLAAA (362 aa). A disulfide bond links Cys-26 and Cys-51. N-linked (GlcNAc...) asparagine glycosylation occurs at Asn-60. Residues 70 to 71, 97 to 100, Tyr-141, 204 to 207, and Arg-263 each bind chitin; these read EW, GGWN, and LTYD. Cys-300 and Cys-364 form a disulfide bridge. An important for AKT1 activation and IL8 production region spans residues 324 to 338; it reads QWVGYDDQESVKNKA. Trp-352 lines the chitin pocket.

The protein belongs to the glycosyl hydrolase 18 family. As to quaternary structure, monomer. As to expression, detected in smooth muscle cells in atherosclerotic plaques. Detected in regions of vascular occlusion in the aorta.

The protein resides in the secreted. The protein localises to the extracellular space. Its subcellular location is the cytoplasm. It localises to the perinuclear region. It is found in the endoplasmic reticulum. In terms of biological role, carbohydrate-binding lectin with a preference for chitin. Has no chitinase activity. May play a role in tissue remodeling and in the capacity of cells to respond to and cope with changes in their environment. Plays a role in T-helper cell type 2 (Th2) inflammatory response and IL-13-induced inflammation, regulating allergen sensitization, inflammatory cell apoptosis, dendritic cell accumulation and M2 macrophage differentiation. Facilitates invasion of pathogenic enteric bacteria into colonic mucosa and lymphoid organs. Mediates activation of AKT1 signaling pathway and subsequent IL8 production in colonic epithelial cells. Regulates antibacterial responses in lung by contributing to macrophage bacterial killing, controlling bacterial dissemination and augmenting host tolerance. Also regulates hyperoxia-induced injury, inflammation and epithelial apoptosis in lung. Stimulates migration and adhesion of cultured vascular smooth muscle cells. This chain is Chitinase-3-like protein 1 (CHI3L1), found in Sus scrofa (Pig).